We begin with the raw amino-acid sequence, 1006 residues long: Phosphatidylinositol-3,5-bisphosphate 3-phosphatase MTMR3 (1006 aa).

The span at 1–10 shows a compositional bias: low complexity; it reads MTVTSSAAID. The interval 1 to 29 is disordered; the sequence is MTVTSSAAIDIGGGGGGRRSDRLDSDRTS. Residues 18–29 show a composition bias toward basic and acidic residues; that stretch reads RRSDRLDSDRTS. A Myotubularin phosphatase domain is found at 224–630; sequence AWKFSEAVDE…INLRVWHEVF (407 aa). A 1,2-diacyl-sn-glycero-3-phospho-(1D-myo-inositol-3,5-bisphosphate)-binding residues include asparagine 377, asparagine 402, and isoleucine 403. Asparagine 377, asparagine 402, and isoleucine 403 together coordinate a 1,2-diacyl-sn-glycero-3-phospho-(1D-myo-inositol-3-phosphate). The active-site Phosphocysteine intermediate is cysteine 463. A 1,2-diacyl-sn-glycero-3-phospho-(1D-myo-inositol-3,5-bisphosphate) is bound by residues serine 464, aspartate 465, glycine 466, tryptophan 467, aspartate 468, arginine 469, lysine 505, and arginine 509. A 1,2-diacyl-sn-glycero-3-phospho-(1D-myo-inositol-3-phosphate)-binding residues include serine 464, aspartate 465, glycine 466, tryptophan 467, aspartate 468, and arginine 469. Arginine 509 serves as a coordination point for a 1,2-diacyl-sn-glycero-3-phospho-(1D-myo-inositol-3-phosphate). The disordered stretch occupies residues 641 to 705; sequence FSPKEERPLS…PSDNTNSLPM (65 aa). The span at 651–705 shows a compositional bias: polar residues; it reads GCTTPMNTSTSTNLVKSKSSESINSLNVDGSAKESSQQHPTCSTTPSDNTNSLPM. The segment at 818–883 adopts an FYVE-type zinc-finger fold; sequence EGESGHCAYC…ACDSCYDSMH (66 aa). Zn(2+) is bound by residues cysteine 824, cysteine 827, cysteine 845, cysteine 848, cysteine 853, cysteine 856, cysteine 875, and cysteine 878. Positions 886–1006 are disordered; sequence DLKLSSSSTT…DVLDVNEQPL (121 aa). Composition is skewed to low complexity over residues 890 to 901 and 913 to 926; these read SSSSTTTTSSST and DNNS…VSEN. 2 stretches are compositionally biased toward basic and acidic residues: residues 933–954 and 976–985; these read VEEK…ETKC and HSRDPLKSID.

The protein belongs to the protein-tyrosine phosphatase family. Non-receptor class myotubularin subfamily. As to expression, expressed in the body wall muscle and in eggs. Expressed in head neurons. Expressed in the intestine. Expressed in pharyngeal cells, vulval muscle cells and cells of the tail region.

It is found in the cytoplasm. It localises to the membrane. It carries out the reaction a 1,2-diacyl-sn-glycero-3-phospho-(1D-myo-inositol-3,5-bisphosphate) + H2O = a 1,2-diacyl-sn-glycero-3-phospho-(1D-myo-inositol-5-phosphate) + phosphate. The enzyme catalyses a 1,2-diacyl-sn-glycero-3-phospho-(1D-myo-inositol-3-phosphate) + H2O = a 1,2-diacyl-sn-glycero-3-phospho-(1D-myo-inositol) + phosphate. The catalysed reaction is 1,2-dihexadecanoyl-sn-glycero-3-phospho-(1D-myo-inositol-3-phosphate) + H2O = 1,2-dihexadecanoyl-sn-glycero-3-phospho-(1D-myo-inositol) + phosphate. It catalyses the reaction 1,2-dihexadecanoyl-sn-glycero-3-phospho-(1D-myo-inositol-3,5-phosphate) + H2O = 1,2-dihexadecanoyl-sn-glycero-3-phospho-(1D-myo-inositol-5-phosphate) + phosphate. It carries out the reaction 1,2-dioctanoyl-sn-glycero-3-phospho-(1-D-myo-inositol-3-phosphate) + H2O = 1,2-dioctanoyl-sn-glycero-3-phospho-(1D-myo-inositol) + phosphate. Its activity is regulated as follows. Inhibited by sodium vanadate and peroxide. In terms of biological role, preferentially dephosphorylates phosphatidylinositol 3-phosphate (PI3P), and has some activity towards phosphatidylinositol 3,5-bisphosphate (PI35P). Positively regulates autophagy and is recruited to autophagosomes by PI3P where it catalyzes PI3P turnover to promote autophagosome maturation. Thought to have a role in maintenance of muscle function. Involved in locomotion and lifespan determination. The chain is Phosphatidylinositol-3,5-bisphosphate 3-phosphatase MTMR3 from Caenorhabditis elegans.